The chain runs to 293 residues: Pyridoxal 5'-phosphate synthase subunit PdxS (293 aa).

Aspartate 23 contributes to the D-ribose 5-phosphate binding site. The active-site Schiff-base intermediate with D-ribose 5-phosphate is the lysine 80. Glycine 152 is a binding site for D-ribose 5-phosphate. Arginine 164 provides a ligand contact to D-glyceraldehyde 3-phosphate. D-ribose 5-phosphate-binding positions include glycine 213 and 234 to 235; that span reads GS.

Belongs to the PdxS/SNZ family. As to quaternary structure, in the presence of PdxT, forms a dodecamer of heterodimers.

The enzyme catalyses aldehydo-D-ribose 5-phosphate + D-glyceraldehyde 3-phosphate + L-glutamine = pyridoxal 5'-phosphate + L-glutamate + phosphate + 3 H2O + H(+). It functions in the pathway cofactor biosynthesis; pyridoxal 5'-phosphate biosynthesis. Functionally, catalyzes the formation of pyridoxal 5'-phosphate from ribose 5-phosphate (RBP), glyceraldehyde 3-phosphate (G3P) and ammonia. The ammonia is provided by the PdxT subunit. Can also use ribulose 5-phosphate and dihydroxyacetone phosphate as substrates, resulting from enzyme-catalyzed isomerization of RBP and G3P, respectively. The polypeptide is Pyridoxal 5'-phosphate synthase subunit PdxS (Thermus thermophilus (strain ATCC 27634 / DSM 579 / HB8)).